We begin with the raw amino-acid sequence, 158 residues long: Extracellular giant hemoglobin major globin subunit A2 (158 aa).

The first 16 residues, M1–A16, serve as a signal peptide directing secretion. One can recognise a Globin domain in the interval D17 to G158. A disulfide bridge connects residues C18 and C148. C89 is a binding site for hydrogen sulfide. H110 lines the heme b pocket.

It belongs to the globin family. As to quaternary structure, the 400 kDa hemoglobin consists of a spherical 24-mer arranged as a double layer of dome-shaped dodecamers. Each dodecamer is composed of the 3-fold trimer of the tetramer A1-A2-B1-B2 having one intra-tetramer (A1-B2) disulfide bond and one inter-tetramer (B1-B2) disulfide bond per tetramer.

It is found in the secreted. The extracellular giant hemoglobin is able to bind and transport oxygen and hydrosulfide simultaneously and reversibly at two different sites. This Oligobrachia mashikoi (Beard worm) protein is Extracellular giant hemoglobin major globin subunit A2 (ghbA2).